The primary structure comprises 185 residues: Small ribosomal subunit protein uS4 (185 aa).

Residues 107–179 form the S4 RNA-binding domain; the sequence is RRLQTLVYRK…NGRRKRKNNH (73 aa). The tract at residues 161–185 is disordered; that stretch reads NTPLTNPEINGRRKRKNNHAGKEDN.

Belongs to the universal ribosomal protein uS4 family.

The polypeptide is Small ribosomal subunit protein uS4 (Entamoeba histolytica (strain ATCC 30459 / HM-1:IMSS / ABRM)).